Reading from the N-terminus, the 150-residue chain is UPF0260 protein CGSHiGG_00425 (150 aa).

This sequence belongs to the UPF0260 family.

In Haemophilus influenzae (strain PittGG), this protein is UPF0260 protein CGSHiGG_00425.